A 577-amino-acid chain; its full sequence is uncharacterized protein (577 aa).

Composition is skewed to polar residues over residues Met-1 to Ser-21 and Ser-68 to Glu-87. 2 disordered regions span residues Met-1–Pro-24 and Ser-68–Val-93. The next 12 membrane-spanning stretches (helical) occupy residues Cys-139 to Ala-159, Leu-174 to Leu-194, Ile-204 to Ile-224, Phe-232 to Met-252, Ile-262 to Phe-282, Trp-292 to Cys-312, Pro-367 to Leu-387, Met-402 to Ile-422, Leu-447 to Ser-467, Val-473 to Phe-493, Tyr-504 to Phe-526, and Gly-543 to Phe-563.

Belongs to the major facilitator superfamily. CAR1 family.

It is found in the endoplasmic reticulum. The protein resides in the membrane. This is an uncharacterized protein from Schizosaccharomyces pombe (strain 972 / ATCC 24843) (Fission yeast).